The chain runs to 273 residues: Large ribosomal subunit protein uL2 (273 aa).

2 disordered regions span residues D35–I54 and G222–K273. Positions D229–N239 are enriched in basic and acidic residues. A compositionally biased stretch (basic residues) spans K253–K273.

The protein belongs to the universal ribosomal protein uL2 family. As to quaternary structure, part of the 50S ribosomal subunit. Forms a bridge to the 30S subunit in the 70S ribosome.

Its function is as follows. One of the primary rRNA binding proteins. Required for association of the 30S and 50S subunits to form the 70S ribosome, for tRNA binding and peptide bond formation. It has been suggested to have peptidyltransferase activity; this is somewhat controversial. Makes several contacts with the 16S rRNA in the 70S ribosome. The polypeptide is Large ribosomal subunit protein uL2 (Aeromonas hydrophila subsp. hydrophila (strain ATCC 7966 / DSM 30187 / BCRC 13018 / CCUG 14551 / JCM 1027 / KCTC 2358 / NCIMB 9240 / NCTC 8049)).